The sequence spans 211 residues: ATP phosphoribosyltransferase (211 aa).

It belongs to the ATP phosphoribosyltransferase family. Short subfamily. As to quaternary structure, heteromultimer composed of HisG and HisZ subunits.

It localises to the cytoplasm. It catalyses the reaction 1-(5-phospho-beta-D-ribosyl)-ATP + diphosphate = 5-phospho-alpha-D-ribose 1-diphosphate + ATP. The protein operates within amino-acid biosynthesis; L-histidine biosynthesis; L-histidine from 5-phospho-alpha-D-ribose 1-diphosphate: step 1/9. In terms of biological role, catalyzes the condensation of ATP and 5-phosphoribose 1-diphosphate to form N'-(5'-phosphoribosyl)-ATP (PR-ATP). Has a crucial role in the pathway because the rate of histidine biosynthesis seems to be controlled primarily by regulation of HisG enzymatic activity. The protein is ATP phosphoribosyltransferase of Bacillus cereus (strain 03BB102).